A 299-amino-acid polypeptide reads, in one-letter code: Hemolysin C homolog (299 aa).

CBS domains follow at residues 80–142 and 145–202; these read MVPR…NGRL and LIRK…IDDE.

Belongs to the UPF0053 family. Hemolysin C subfamily.

The protein is Hemolysin C homolog (tlyC) of Rickettsia rickettsii (strain Sheila Smith).